The primary structure comprises 452 residues: MASKAPRPPEAIAAIATAPGRGGIGVVRVSGAGLTGFAQQLCGREPQPRLATLARFRDADGATIDEGILLYFPAPASFTGEDVLELQGHGGPVVMQMLLARCLALGARLAEPGEFTRRAFLNGKLDLAQAEAVADLIEASTAAAARSALRSLSGQFSEEVLRIRDALIDLRMLVEATIDFPEEEVEFLDKGRALPRLAAIRTQLDALLDRARQGALLRTGMNVVLVGRPNVGKSSLLNQLAGEDRAIVTDVAGTTRDALREAIQIEGIPLHVIDTAGLRQTSDVVERIGIERTWREVERADVVLRVIDSEGAEEDALEAELAARCPSAAARITVVNKIDLLGLAPERTETAGAVRLRLSARSGDGVDLLRTELLRAAGWHAHGEDVVLARERHLLALREALDHLAAAEAAASALELFAEELRLAQEALAGITGEFSADDLLGEIFSRFCIGK.

Residues Arg-28, Glu-85, and Lys-124 each contribute to the (6S)-5-formyl-5,6,7,8-tetrahydrofolate site. The TrmE-type G domain maps to 220–378; it reads GMNVVLVGRP…LRTELLRAAG (159 aa). Asn-230 provides a ligand contact to K(+). Residues 230–235, 249–255, 274–277, and 359–361 contribute to the GTP site; these read NVGKSS, TDVAGTT, DTAG, and SAR. Residue Ser-234 coordinates Mg(2+). Thr-249, Val-251, and Thr-254 together coordinate K(+). Position 255 (Thr-255) interacts with Mg(2+). A (6S)-5-formyl-5,6,7,8-tetrahydrofolate-binding site is contributed by Lys-452.

The protein belongs to the TRAFAC class TrmE-Era-EngA-EngB-Septin-like GTPase superfamily. TrmE GTPase family. Homodimer. Heterotetramer of two MnmE and two MnmG subunits. Requires K(+) as cofactor.

The protein localises to the cytoplasm. Functionally, exhibits a very high intrinsic GTPase hydrolysis rate. Involved in the addition of a carboxymethylaminomethyl (cmnm) group at the wobble position (U34) of certain tRNAs, forming tRNA-cmnm(5)s(2)U34. In Azoarcus sp. (strain BH72), this protein is tRNA modification GTPase MnmE.